Reading from the N-terminus, the 201-residue chain is MAGKKKSKSEALPLDLDNIKPMDHLQPVPKTRSSSITSIESADEPGTMKQVLLPPTIKEFDELEQFESFVRDETWDNDFDYFHGRLHYYPPFVMKSCQNNLEKIKPTMNKNSKKFRRDLQHHIQKHLIKDLEKCCGYELNFGKGEVVETDNKVTWKFKDETDHGFSKEEEDMYDRHWRLELDVSCTNESAMVDVEYKSIPM.

Residues Met1–Pro45 form a disordered region. Positions Thr31 to Glu40 are enriched in polar residues.

It belongs to the RGI1 family.

It localises to the cell membrane. Involved in the control of energetic metabolism and significantly contribute to cell fitness, especially under respiratory growth conditions. In Candida albicans (strain SC5314 / ATCC MYA-2876) (Yeast), this protein is Respiratory growth induced protein 1 (RGI1).